Consider the following 106-residue polypeptide: Antitoxin MazE3 (106 aa).

As to quaternary structure, forms a complex with cognate toxin MazF3, possibly with 1:1 stoichiometry.

Antitoxin component of a type II toxin-antitoxin (TA) system. Upon expression in E.coli and M.smegmatis neutralizes the effect of cognate toxin MazF3. Overexpression of MazE3 alone decreased persister cells formation in M.smegmatis upon challenge with gentamicin or kanamycin. The protein is Antitoxin MazE3 (mazE3) of Mycobacterium tuberculosis (strain ATCC 25618 / H37Rv).